Reading from the N-terminus, the 472-residue chain is Cannabinoid receptor 1 (472 aa).

Over 1–116 (MKSILDGLAD…CFMVLNPSQQ (116 aa)) the chain is Extracellular. The required for mitochondrial localization stretch occupies residues 2 to 23 (KSILDGLADTTFRTITTDLLYV). N-linked (GlcNAc...) asparagine glycosylation is found at Asn-77 and Asn-83. The helical transmembrane segment at 117–142 (LAIAVLSLTLGTFTVLENLLVLCVIL) threads the bilayer. Residues 143-154 (HSRSLRCRPSYH) are Cytoplasmic-facing. A helical membrane pass occupies residues 155-175 (FIGSLAVADLLGSVIFVYSFI). The Extracellular portion of the chain corresponds to 176-187 (DFHVFHRKDSRN). The helical transmembrane segment at 188-212 (VFLFKLGGVTASFTASVGSLFLTAI) threads the bilayer. Over 213–232 (DRYISIHRPLAYKRIVTRPK) the chain is Cytoplasmic. Residues 233-255 (AVVAFCLMWTIAIVIAVLPLLGW) form a helical membrane-spanning segment. Topologically, residues 256 to 273 (NCEKLQSVCSDIFPHIDE) are extracellular. A helical membrane pass occupies residues 274-299 (TYLMFWIGVTSVLLLFIVYAYMYILW). Residues 300–344 (KAHSHAVRMIQRGTQKSIIIHTSEDGKVQVTRPDQARMDIRLAKT) are Cytoplasmic-facing. Residues 345–365 (LVLILVVLIICWGPLLAIMVY) form a helical membrane-spanning segment. Topologically, residues 366-377 (DVFGKMNKLIKT) are extracellular. A helical transmembrane segment spans residues 378-399 (VFAFCSMLCLLNSTVNPIIYAL). At 400 to 472 (RSKDLRHAFR…VSTDTSAEAL (73 aa)) the chain is on the cytoplasmic side. Cys-415 carries the S-palmitoyl cysteine lipid modification. Phosphoserine occurs at positions 425 and 429.

This sequence belongs to the G-protein coupled receptor 1 family. In terms of assembly, interacts (via C-terminus) with CNRIP1; this interaction attenuates constitutive, but not agonist-dependent, inhibition of voltage-gated Ca(2+) channels in neurons. Associates with G protein alpha subunits, including G(i) alpha-1/GNAI1, G(i) alpha-3/GNAI3 and G(o)-alpha/GNAO1; palmitoylation is important for interaction with GNAI3 and GNAO1. In terms of processing, palmitoylation at Cys-415 is important for recruitment at plasma membrane and lipid rafts and association with G protein alpha subunits. As to expression, widely expressed, with highest levels in fetal and adult brain. Expression levels of isoform 2 and isoform 3 are much lower than those of isoform 1.

Its subcellular location is the cell membrane. The protein resides in the membrane raft. The protein localises to the mitochondrion outer membrane. It localises to the cell projection. It is found in the axon. Its subcellular location is the presynapse. With respect to regulation, hemopressin, a peptide derived from hemoglobin subunit alpha (HBA1 and/or HBA2), acts as an antagonist peptide: hemopressin-binding efficiently blocks cannabinoid receptor CNR1 and subsequent signaling. In terms of biological role, G-protein coupled receptor for endogenous cannabinoids (eCBs), including N-arachidonoylethanolamide (also called anandamide or AEA) and 2-arachidonoylglycerol (2-AG), as well as phytocannabinoids, such as delta(9)-tetrahydrocannabinol (THC). Mediates many cannabinoid-induced effects, acting, among others, on food intake, memory loss, gastrointestinal motility, catalepsy, ambulatory activity, anxiety, chronic pain. Signaling typically involves reduction in cyclic AMP. In the hypothalamus, may have a dual effect on mitochondrial respiration depending upon the agonist dose and possibly upon the cell type. Increases respiration at low doses, while decreases respiration at high doses. At high doses, CNR1 signal transduction involves G-protein alpha-i protein activation and subsequent inhibition of mitochondrial soluble adenylate cyclase, decrease in cyclic AMP concentration, inhibition of protein kinase A (PKA)-dependent phosphorylation of specific subunits of the mitochondrial electron transport system, including NDUFS2. In the hypothalamus, inhibits leptin-induced reactive oxygen species (ROS) formation and mediates cannabinoid-induced increase in SREBF1 and FASN gene expression. In response to cannabinoids, drives the release of orexigenic beta-endorphin, but not that of melanocyte-stimulating hormone alpha/alpha-MSH, from hypothalamic POMC neurons, hence promoting food intake. In the hippocampus, regulates cellular respiration and energy production in response to cannabinoids. Involved in cannabinoid-dependent depolarization-induced suppression of inhibition (DSI), a process in which depolarization of CA1 postsynaptic pyramidal neurons mobilizes eCBs, which retrogradely activate presynaptic CB1 receptors, transiently decreasing GABAergic inhibitory neurotransmission. Also reduces excitatory synaptic transmission. In superior cervical ganglions and cerebral vascular smooth muscle cells, inhibits voltage-gated Ca(2+) channels in a constitutive, as well as agonist-dependent manner. In cerebral vascular smooth muscle cells, cannabinoid-induced inhibition of voltage-gated Ca(2+) channels leads to vasodilation and decreased vascular tone. Induces leptin production in adipocytes and reduces LRP2-mediated leptin clearance in the kidney, hence participating in hyperleptinemia. In adipose tissue, CNR1 signaling leads to increased expression of SREBF1, ACACA and FASN genes. In the liver, activation by endocannabinoids leads to increased de novo lipogenesis and reduced fatty acid catabolism, associated with increased expression of SREBF1/SREBP-1, GCK, ACACA, ACACB and FASN genes. May also affect de novo cholesterol synthesis and HDL-cholesteryl ether uptake. Peripherally modulates energy metabolism. In high carbohydrate diet-induced obesity, may decrease the expression of mitochondrial dihydrolipoyl dehydrogenase/DLD in striated muscles, as well as that of selected glucose/ pyruvate metabolic enzymes, hence affecting energy expenditure through mitochondrial metabolism. In response to cannabinoid anandamide, elicits a pro-inflammatory response in macrophages, which involves NLRP3 inflammasome activation and IL1B and IL18 secretion. In macrophages infiltrating pancreatic islets, this process may participate in the progression of type-2 diabetes and associated loss of pancreatic beta-cells. Functionally, binds both 2-arachidonoylglycerol (2-AG) and anandamide. Only binds 2-arachidonoylglycerol (2-AG) with high affinity. Contrary to its effect on isoform 1, 2-AG behaves as an inverse agonist on isoform 2 in assays measuring GTP binding to membranes. Its function is as follows. Only binds 2-arachidonoylglycerol (2-AG) with high affinity. Contrary to its effect on isoform 1, 2-AG behaves as an inverse agonist on isoform 3 in assays measuring GTP binding to membranes. In Homo sapiens (Human), this protein is Cannabinoid receptor 1 (CNR1).